A 248-amino-acid chain; its full sequence is Segregation and condensation protein A (248 aa).

The protein belongs to the ScpA family. As to quaternary structure, component of a cohesin-like complex composed of ScpA, ScpB and the Smc homodimer, in which ScpA and ScpB bind to the head domain of Smc. The presence of the three proteins is required for the association of the complex with DNA.

It is found in the cytoplasm. Functionally, participates in chromosomal partition during cell division. May act via the formation of a condensin-like complex containing Smc and ScpB that pull DNA away from mid-cell into both cell halves. The sequence is that of Segregation and condensation protein A from Bacillus cytotoxicus (strain DSM 22905 / CIP 110041 / 391-98 / NVH 391-98).